Here is a 474-residue protein sequence, read N- to C-terminus: 2-succinylbenzoate--CoA ligase (474 aa).

It belongs to the ATP-dependent AMP-binding enzyme family. MenE subfamily.

It catalyses the reaction 2-succinylbenzoate + ATP + CoA = 2-succinylbenzoyl-CoA + AMP + diphosphate. The protein operates within quinol/quinone metabolism; 1,4-dihydroxy-2-naphthoate biosynthesis; 1,4-dihydroxy-2-naphthoate from chorismate: step 5/7. Its pathway is quinol/quinone metabolism; menaquinone biosynthesis. In terms of biological role, converts 2-succinylbenzoate (OSB) to 2-succinylbenzoyl-CoA (OSB-CoA). The sequence is that of 2-succinylbenzoate--CoA ligase from Staphylococcus epidermidis (strain ATCC 35984 / DSM 28319 / BCRC 17069 / CCUG 31568 / BM 3577 / RP62A).